The following is an 89-amino-acid chain: Small ribosomal subunit protein uS19 (89 aa).

The protein belongs to the universal ribosomal protein uS19 family.

Protein S19 forms a complex with S13 that binds strongly to the 16S ribosomal RNA. The sequence is that of Small ribosomal subunit protein uS19 from Xylella fastidiosa (strain 9a5c).